The following is a 248-amino-acid chain: ATP synthase delta chain, chloroplastic (248 aa).

The transit peptide at 1-60 (MAALQQTPITFQSRSPPPTQIISGPTAKLSFSGGLKLPKLTIKLRSNRTSRRGGGAAGSK) directs the protein to the chloroplast.

Belongs to the ATPase delta chain family. In terms of assembly, F-type ATPases have 2 components, CF(1) - the catalytic core - and CF(0) - the membrane proton channel. CF(1) has five subunits: alpha(3), beta(3), gamma(1), delta(1), epsilon(1). CF(0) has three main subunits: a, b and c.

The protein localises to the plastid. It is found in the chloroplast thylakoid membrane. This protein seems to be part of the stalk that links CF(0) to CF(1). It either transmits conformational changes from CF(0) into CF(1) or is implicated in proton conduction. This Nicotiana tabacum (Common tobacco) protein is ATP synthase delta chain, chloroplastic (ATPD).